We begin with the raw amino-acid sequence, 636 residues long: DNA-dependent metalloprotease SPRTN (636 aa).

The interval 19–42 (QETPAAGWPDEDCPSSKRRRVDPS) is disordered. A SprT-like domain is found at 76 to 183 (RAMFLQFNDK…ASGTNITIYH (108 aa)). Position 141 (H141) interacts with Zn(2+). E142 is an active-site residue. Residues H145 and H160 each contribute to the Zn(2+) site. Disordered stretches follow at residues 238–382 (TYTK…GKQR) and 398–430 (RGAS…PSGK). Residues 241–268 (KIKEPENYGKTGKSDKQRDKMPATEMPK) are compositionally biased toward basic and acidic residues. Residues 272–281 (PPSSTSSSGS) show a composition bias toward low complexity. The SHP-box motif lies at 290–298 (FSGRGFVLG). The segment covering 302–311 (QIPTNKQIQS) has biased composition (polar residues). Pro residues predominate over residues 313-327 (PKAPPEPLHSPPDSP). Polar residues predominate over residues 341–374 (RLSSGTSNIPRKRSVGNTNAFINVNGSPVRISNG). The span at 399 to 416 (GASAVGSSKSSTDASTAD) shows a compositional bias: low complexity. The short motif at 451–458 (ESNISKYF) is the PIP-box element. The segment at 473–608 (TFGSPQKSAI…VRDQQANNPP (136 aa)) is disordered. 2 stretches are compositionally biased toward polar residues: residues 492 to 523 (FGSN…SGSS) and 545 to 554 (SPRTSGTTPS). Positions 535–566 (SNFPSPRNIGSPRTSGTTPSGAKKRSWEEHNS) match the Nuclear localization signal motif. 2 stretches are compositionally biased toward basic and acidic residues: residues 559-570 (RSWEEHNSERVF) and 584-593 (TDKKREEVRS). The segment at 612 to 636 (TVHCPVCHIRLPESTINDHLDSCLL) adopts a UBZ4-type zinc-finger fold. Zn(2+)-binding residues include C615, C618, H630, and C634.

This sequence belongs to the Spartan family. Homodimer. Requires Zn(2+) as cofactor. In terms of processing, autocatalytically cleaved in response to double-stranded DNA-binding: autocatalytic cleavage takes place in trans and leads to inactivation.

Its subcellular location is the nucleus. It localises to the chromosome. Its activity is regulated as follows. DNA-binding activates the protease activity: single-stranded DNA-binding specifically activates ability to cleave covalent DNA-protein cross-links (DPCs). In contrast, double-stranded DNA-binding specifically activates autocatalytic cleavage, and subsequent inactivation. Its function is as follows. DNA-dependent metalloendopeptidase that mediates the proteolytic cleavage of covalent DNA-protein cross-links (DPCs) during DNA synthesis, thereby playing a key role in maintaining genomic integrity. DPCs are highly toxic DNA lesions that interfere with essential chromatin transactions, such as replication and transcription, and which are induced by reactive agents, such as UV light or formaldehyde. Associates with the DNA replication machinery and specifically removes DPCs during DNA synthesis. Catalyzes proteolytic cleavage of the hmces DNA-protein cross-link following unfolding by the brip1/fancj helicase. Acts as a pleiotropic protease for DNA-binding proteins cross-linked with DNA, such as top1, top2a, histones H3 and H4. Mediates degradation of DPCs that are not ubiquitinated, while it is not able to degrade ubiquitinated DPCs. SPRTN activation requires polymerase collision with DPCs followed by helicase bypass of DPCs. May also act as a 'reader' of ubiquitinated pcna: facilitates chromatin association of rad18 and is required for efficient pcna monoubiquitination, promoting a feed-forward loop to enhance pcna ubiquitination and translesion DNA synthesis. Acts as a regulator of translesion DNA synthesis by recruiting vcp/p97 to sites of DNA damage. The polypeptide is DNA-dependent metalloprotease SPRTN (Danio rerio (Zebrafish)).